Consider the following 446-residue polypeptide: Nitrate/nitrite binding protein NrtA (446 aa).

Positions 1-28 are cleaved as a signal peptide; that stretch reads MSNFSRSTRRKFMFTAGAAAIGGVVLHG. A lipid anchor (N-palmitoyl cysteine) is attached at Cys-29. A lipid anchor (S-diacylglycerol cysteine) is attached at Cys-29. Nitrate-binding residues include Trp-102, Gln-155, His-196, Gly-240, and Lys-269.

It belongs to the CmpA/NrtA family. As to quaternary structure, the complex is composed of two ATP-binding proteins (NrtC and NrtD), two transmembrane proteins (NrtB) and a solute-binding protein (NrtA).

The protein localises to the cell inner membrane. Its function is as follows. Part of the ABC transporter complex NrtABCD involved in nitrate uptake. The complex is probably also involved in nitrite transport. NrtA is the substrate-binding protein. Binds nitrate. This Synechocystis sp. (strain ATCC 27184 / PCC 6803 / Kazusa) protein is Nitrate/nitrite binding protein NrtA.